A 201-amino-acid chain; its full sequence is Thymidylate kinase (201 aa).

7–14 provides a ligand contact to ATP; sequence GGEGSGKT.

The protein belongs to the thymidylate kinase family.

It carries out the reaction dTMP + ATP = dTDP + ADP. In terms of biological role, phosphorylation of dTMP to form dTDP in both de novo and salvage pathways of dTTP synthesis. The sequence is that of Thymidylate kinase from Acholeplasma laidlawii (strain PG-8A).